Consider the following 257-residue polypeptide: Thiazole synthase (257 aa).

The active-site Schiff-base intermediate with DXP is the Lys-99. 1-deoxy-D-xylulose 5-phosphate-binding positions include Gly-160, 186 to 187 (AG), and 208 to 209 (NT).

This sequence belongs to the ThiG family. As to quaternary structure, homotetramer. Forms heterodimers with either ThiH or ThiS.

Its subcellular location is the cytoplasm. It catalyses the reaction [ThiS sulfur-carrier protein]-C-terminal-Gly-aminoethanethioate + 2-iminoacetate + 1-deoxy-D-xylulose 5-phosphate = [ThiS sulfur-carrier protein]-C-terminal Gly-Gly + 2-[(2R,5Z)-2-carboxy-4-methylthiazol-5(2H)-ylidene]ethyl phosphate + 2 H2O + H(+). It functions in the pathway cofactor biosynthesis; thiamine diphosphate biosynthesis. Catalyzes the rearrangement of 1-deoxy-D-xylulose 5-phosphate (DXP) to produce the thiazole phosphate moiety of thiamine. Sulfur is provided by the thiocarboxylate moiety of the carrier protein ThiS. In vitro, sulfur can be provided by H(2)S. This chain is Thiazole synthase, found in Thermodesulfovibrio yellowstonii (strain ATCC 51303 / DSM 11347 / YP87).